A 345-amino-acid chain; its full sequence is Tyrosine--tRNA ligase (345 aa).

Position 36 (Tyr36) interacts with L-tyrosine. Residues 41–49 (PTGEMHIGH) carry the 'HIGH' region motif. The L-tyrosine site is built by Tyr163, Gln167, Asp170, and Gln185.

This sequence belongs to the class-I aminoacyl-tRNA synthetase family. TyrS type 3 subfamily. As to quaternary structure, homodimer.

The protein resides in the cytoplasm. The catalysed reaction is tRNA(Tyr) + L-tyrosine + ATP = L-tyrosyl-tRNA(Tyr) + AMP + diphosphate + H(+). Catalyzes the attachment of tyrosine to tRNA(Tyr) in a two-step reaction: tyrosine is first activated by ATP to form Tyr-AMP and then transferred to the acceptor end of tRNA(Tyr). In Natronomonas pharaonis (strain ATCC 35678 / DSM 2160 / CIP 103997 / JCM 8858 / NBRC 14720 / NCIMB 2260 / Gabara) (Halobacterium pharaonis), this protein is Tyrosine--tRNA ligase.